We begin with the raw amino-acid sequence, 399 residues long: Tryptophan synthase beta chain (399 aa).

At K92 the chain carries N6-(pyridoxal phosphate)lysine.

Belongs to the TrpB family. As to quaternary structure, tetramer of two alpha and two beta chains. The cofactor is pyridoxal 5'-phosphate.

It catalyses the reaction (1S,2R)-1-C-(indol-3-yl)glycerol 3-phosphate + L-serine = D-glyceraldehyde 3-phosphate + L-tryptophan + H2O. The protein operates within amino-acid biosynthesis; L-tryptophan biosynthesis; L-tryptophan from chorismate: step 5/5. Functionally, the beta subunit is responsible for the synthesis of L-tryptophan from indole and L-serine. This chain is Tryptophan synthase beta chain, found in Oceanobacillus iheyensis (strain DSM 14371 / CIP 107618 / JCM 11309 / KCTC 3954 / HTE831).